Consider the following 266-residue polypeptide: Norfluorocurarine synthase 2 (266 aa).

An AB hydrolase-1 domain is found at 11-121 (HFVLVHGAGH…IMPDSTHPPI (111 aa)). Catalysis depends on residues S86, D216, and H244.

This sequence belongs to the AB hydrolase superfamily. In terms of assembly, homodimer. In terms of tissue distribution, mainly expressed in roots.

It catalyses the reaction 17-dehydropreakuammicine + H2O = norfluorocurarine + methanol + CO2. It participates in alkaloid biosynthesis. Hydrolase involved in the biosynthesis of curare monoterpene indole alkaloids (MIAs), natural products such as strychnine, a neurotoxic compound used as a pesticide to control rodents, and its pharmacologically active derivatives, including brucine, used to regulate blood pressure. Curare alkaloids act as animal glycine receptor antagonists. Catalyzes the conversion of dehydropreakuammicine to norfluorocurarine. This Strychnos nux-vomica (Poison nut) protein is Norfluorocurarine synthase 2.